Reading from the N-terminus, the 401-residue chain is Protein IQ-DOMAIN 24 (401 aa).

The segment at 1–48 (MGFFGRLFGSKKQEKATPNRRRWSFATRSSHPENDSSSHSSKRRGDED) is disordered. Residues 105-121 (EYKAAMKIQSAFRGYLA) form a calmodulin-binding region. IQ domains are found at residues 105–133 (EYKAAMKIQSAFRGYLARRALRALKALVK) and 134–156 (LQALVKGHIVRKQTADMLRRMQT). Low complexity-rich tracts occupy residues 165-176 (RASRSSHVSDSS) and 278-287 (RSRTGSSSGG). Disordered regions lie at residues 165-186 (RASRSSHVSDSSHPPTLMIPSS) and 258-296 (SPRKRGSLVVPTSVENSPQLRSRTGSSSGGSRRKTPFTP).

Belongs to the IQD family. Binds to multiple calmodulin (CaM) in the presence of Ca(2+) and CaM-like proteins.

It localises to the nucleus. Its subcellular location is the nuclear body. The protein localises to the cell membrane. Its function is as follows. May be involved in cooperative interactions with calmodulins or calmodulin-like proteins. Recruits calmodulin proteins to microtubules, thus being a potential scaffold in cellular signaling and trafficking. May associate with nucleic acids and regulate gene expression at the transcriptional or post-transcriptional level. In Arabidopsis thaliana (Mouse-ear cress), this protein is Protein IQ-DOMAIN 24.